The following is a 338-amino-acid chain: 1-aminocyclopropane-1-carboxylate deaminase (338 aa).

At Lys51 the chain carries N6-(pyridoxal phosphate)lysine. The active-site Nucleophile is Ser78.

It belongs to the ACC deaminase/D-cysteine desulfhydrase family. As to quaternary structure, homotrimer. Pyridoxal 5'-phosphate is required as a cofactor.

It carries out the reaction 1-aminocyclopropane-1-carboxylate + H2O = 2-oxobutanoate + NH4(+). Catalyzes a cyclopropane ring-opening reaction, the irreversible conversion of 1-aminocyclopropane-1-carboxylate (ACC) to ammonia and alpha-ketobutyrate. Allows growth on ACC as a nitrogen source. The protein is 1-aminocyclopropane-1-carboxylate deaminase of Burkholderia lata (strain ATCC 17760 / DSM 23089 / LMG 22485 / NCIMB 9086 / R18194 / 383).